The chain runs to 196 residues: Corticoliberin (196 aa).

Positions 1–24 (MRLPLLLSAGVLLVVSLPCPPCRA) are cleaved as a signal peptide. The propeptide occupies 25-153 (LLSRGPIPGA…RQETPERERR (129 aa)). Residues 122-158 (PRRQLDSPAGPAERGEENALGSRQETPERERRSEEPP) form a disordered region. Basic and acidic residues predominate over residues 146 to 156 (ETPERERRSEE). Position 194 is an isoleucine amide (I194).

The protein belongs to the sauvagine/corticotropin-releasing factor/urotensin I family. In terms of assembly, interacts (via C-terminus) with CRFR1 (via N-terminal extracellular domain). As to expression, produced by the hypothalamus.

It is found in the secreted. Functionally, hormone regulating the release of corticotropin from pituitary gland. Induces NLRP6 in intestinal epithelial cells, hence may influence gut microbiota profile. The sequence is that of Corticoliberin (CRH) from Canis lupus familiaris (Dog).